The sequence spans 262 residues: Small ribosomal subunit protein uS3 (262 aa).

In terms of domain architecture, KH type-2 spans 39 to 107; the sequence is VREFLKKKLK…PVHVNIEEIR (69 aa). A disordered region spans residues 211–262; that stretch reads NDAPVVEEPQEERRKRPGRPEGRRREGEGRPAGQRRGAGAGARRGTDAKTGE. Basic and acidic residues predominate over residues 221–239; that stretch reads EERRKRPGRPEGRRREGEG.

It belongs to the universal ribosomal protein uS3 family. In terms of assembly, part of the 30S ribosomal subunit. Forms a tight complex with proteins S10 and S14.

In terms of biological role, binds the lower part of the 30S subunit head. Binds mRNA in the 70S ribosome, positioning it for translation. The sequence is that of Small ribosomal subunit protein uS3 from Ralstonia pickettii (strain 12J).